The primary structure comprises 432 residues: 3-phosphoshikimate 1-carboxyvinyltransferase (432 aa).

Residues lysine 22, serine 23, and arginine 27 each contribute to the 3-phosphoshikimate site. Lysine 22 provides a ligand contact to phosphoenolpyruvate. Residues glycine 96 and arginine 127 each contribute to the phosphoenolpyruvate site. 3-phosphoshikimate contacts are provided by serine 173, serine 174, glutamine 175, serine 201, aspartate 316, asparagine 339, and lysine 343. Glutamine 175 is a binding site for phosphoenolpyruvate. Aspartate 316 serves as the catalytic Proton acceptor. Phosphoenolpyruvate is bound by residues arginine 347, arginine 391, and lysine 416.

This sequence belongs to the EPSP synthase family. As to quaternary structure, monomer.

It localises to the cytoplasm. It catalyses the reaction 3-phosphoshikimate + phosphoenolpyruvate = 5-O-(1-carboxyvinyl)-3-phosphoshikimate + phosphate. The protein operates within metabolic intermediate biosynthesis; chorismate biosynthesis; chorismate from D-erythrose 4-phosphate and phosphoenolpyruvate: step 6/7. Catalyzes the transfer of the enolpyruvyl moiety of phosphoenolpyruvate (PEP) to the 5-hydroxyl of shikimate-3-phosphate (S3P) to produce enolpyruvyl shikimate-3-phosphate and inorganic phosphate. The protein is 3-phosphoshikimate 1-carboxyvinyltransferase of Actinobacillus pleuropneumoniae serotype 5b (strain L20).